A 277-amino-acid polypeptide reads, in one-letter code: Bifunctional protein FolD (277 aa).

Residues 160–162 (GAS), serine 185, and isoleucine 226 contribute to the NADP(+) site.

It belongs to the tetrahydrofolate dehydrogenase/cyclohydrolase family. As to quaternary structure, homodimer.

The catalysed reaction is (6R)-5,10-methylene-5,6,7,8-tetrahydrofolate + NADP(+) = (6R)-5,10-methenyltetrahydrofolate + NADPH. It catalyses the reaction (6R)-5,10-methenyltetrahydrofolate + H2O = (6R)-10-formyltetrahydrofolate + H(+). It participates in one-carbon metabolism; tetrahydrofolate interconversion. Its function is as follows. Catalyzes the oxidation of 5,10-methylenetetrahydrofolate to 5,10-methenyltetrahydrofolate and then the hydrolysis of 5,10-methenyltetrahydrofolate to 10-formyltetrahydrofolate. This chain is Bifunctional protein FolD, found in Ruthia magnifica subsp. Calyptogena magnifica.